Here is a 328-residue protein sequence, read N- to C-terminus: MKIHLDRTSSGFCIGVQGTINVAEDKLQELGQLYSYGDVVHNEVEVKRLEALGLVTVDDAGFKQLSNTSVLIRAHGEPPATYTIAAENNLAITDTTCPVVSRLQRTTRLLFQLGYQIIIYGKRVHPEVIGLNGQCDNCALIIKHADLSDPKELEGFEPSAKTALISQTTMDIPGFYELKANLEAYVARVNGSAVEPWMAIRDIDITADMSKVRTMPRYVFKDTICRQVSSRNQKLHDFSLANDVVVFVAGKKSSNGQVLFNICKAANPRTFFIEDIEEINPEWFAAHEGKAVESVGICGATSTPMWHLEKVANYIEATYANSESIIAQ.

C13 lines the [4Fe-4S] cluster pocket. H41 and H75 together coordinate (2E)-4-hydroxy-3-methylbut-2-enyl diphosphate. Residues H41 and H75 each contribute to the dimethylallyl diphosphate site. Isopentenyl diphosphate is bound by residues H41 and H75. A [4Fe-4S] cluster-binding site is contributed by C97. H125 is a (2E)-4-hydroxy-3-methylbut-2-enyl diphosphate binding site. H125 is a dimethylallyl diphosphate binding site. H125 is a binding site for isopentenyl diphosphate. The active-site Proton donor is E127. T168 is a (2E)-4-hydroxy-3-methylbut-2-enyl diphosphate binding site. C225 serves as a coordination point for [4Fe-4S] cluster. (2E)-4-hydroxy-3-methylbut-2-enyl diphosphate-binding residues include S253, S254, N255, and S302. Residues S253, S254, N255, and S302 each coordinate dimethylallyl diphosphate. Isopentenyl diphosphate contacts are provided by S253, S254, N255, and S302.

The protein belongs to the IspH family. Requires [4Fe-4S] cluster as cofactor.

It carries out the reaction isopentenyl diphosphate + 2 oxidized [2Fe-2S]-[ferredoxin] + H2O = (2E)-4-hydroxy-3-methylbut-2-enyl diphosphate + 2 reduced [2Fe-2S]-[ferredoxin] + 2 H(+). The enzyme catalyses dimethylallyl diphosphate + 2 oxidized [2Fe-2S]-[ferredoxin] + H2O = (2E)-4-hydroxy-3-methylbut-2-enyl diphosphate + 2 reduced [2Fe-2S]-[ferredoxin] + 2 H(+). It participates in isoprenoid biosynthesis; dimethylallyl diphosphate biosynthesis; dimethylallyl diphosphate from (2E)-4-hydroxy-3-methylbutenyl diphosphate: step 1/1. Its pathway is isoprenoid biosynthesis; isopentenyl diphosphate biosynthesis via DXP pathway; isopentenyl diphosphate from 1-deoxy-D-xylulose 5-phosphate: step 6/6. In terms of biological role, catalyzes the conversion of 1-hydroxy-2-methyl-2-(E)-butenyl 4-diphosphate (HMBPP) into a mixture of isopentenyl diphosphate (IPP) and dimethylallyl diphosphate (DMAPP). Acts in the terminal step of the DOXP/MEP pathway for isoprenoid precursor biosynthesis. This Chlorobium chlorochromatii (strain CaD3) protein is 4-hydroxy-3-methylbut-2-enyl diphosphate reductase.